We begin with the raw amino-acid sequence, 364 residues long: Fructose-bisphosphate aldolase A (364 aa).

Y5 carries the post-translational modification Phosphotyrosine. Position 9 is a phosphothreonine (T9). Phosphoserine is present on residues S36 and S39. K42 carries the N6-acetyllysine; alternate modification. K42 is covalently cross-linked (Glycyl lysine isopeptide (Lys-Gly) (interchain with G-Cter in SUMO1); alternate). A Glycyl lysine isopeptide (Lys-Gly) (interchain with G-Cter in SUMO2); alternate cross-link involves residue K42. Residue R43 participates in beta-D-fructose 1,6-bisphosphate binding. Phosphoserine is present on S46. The residue at position 99 (K99) is an N6-(2-hydroxyisobutyryl)lysine. Position 108 is an N6-acetyllysine (K108). K111 carries the post-translational modification N6-acetyllysine; alternate. K111 carries the post-translational modification N6-malonyllysine; alternate. S132 carries the phosphoserine modification. K147 carries the post-translational modification N6-(2-hydroxyisobutyryl)lysine. E188 functions as the Proton acceptor in the catalytic mechanism. The active-site Schiff-base intermediate with dihydroxyacetone-P is K230. Phosphoserine is present on S272. Residues 272–274 (SGG), S301, and R304 contribute to the beta-D-fructose 1,6-bisphosphate site. K312 is modified (N6-malonyllysine). The residue at position 330 (K330) is an N6-acetyllysine.

The protein belongs to the class I fructose-bisphosphate aldolase family. Homotetramer. Interacts with SNX9 and WAS. Interacts with FBP2; the interaction blocks FBP2 inhibition by physiological concentrations of AMP and reduces inhibition by Ca(2+).

It is found in the cytoplasm. Its subcellular location is the myofibril. The protein resides in the sarcomere. It localises to the i band. The protein localises to the m line. It catalyses the reaction beta-D-fructose 1,6-bisphosphate = D-glyceraldehyde 3-phosphate + dihydroxyacetone phosphate. It functions in the pathway carbohydrate degradation; glycolysis; D-glyceraldehyde 3-phosphate and glycerone phosphate from D-glucose: step 4/4. Functionally, catalyzes the reversible conversion of beta-D-fructose 1,6-bisphosphate (FBP) into two triose phosphate and plays a key role in glycolysis and gluconeogenesis. In addition, may also function as scaffolding protein. The sequence is that of Fructose-bisphosphate aldolase A (ALDOA) from Pongo abelii (Sumatran orangutan).